Reading from the N-terminus, the 290-residue chain is Small ribosomal subunit biogenesis GTPase RsgA (290 aa).

A CP-type G domain is found at 63 to 220 (KNELIRPPIA…IADTPGFSNL (158 aa)). GTP-binding positions include 112–115 (NKFD) and 162–170 (GPSGVGKST). Residues Cys244, Cys249, His251, and Cys257 each contribute to the Zn(2+) site.

This sequence belongs to the TRAFAC class YlqF/YawG GTPase family. RsgA subfamily. Monomer. Associates with 30S ribosomal subunit, binds 16S rRNA. It depends on Zn(2+) as a cofactor.

Its subcellular location is the cytoplasm. Its function is as follows. One of several proteins that assist in the late maturation steps of the functional core of the 30S ribosomal subunit. Helps release RbfA from mature subunits. May play a role in the assembly of ribosomal proteins into the subunit. Circularly permuted GTPase that catalyzes slow GTP hydrolysis, GTPase activity is stimulated by the 30S ribosomal subunit. The chain is Small ribosomal subunit biogenesis GTPase RsgA from Carboxydothermus hydrogenoformans (strain ATCC BAA-161 / DSM 6008 / Z-2901).